The following is a 255-amino-acid chain: Sushi domain-containing protein 3 (255 aa).

Residues 1–25 are disordered; sequence MRWAAATLRGKARPRGRAGVTTPAP. At 1–103 the chain is on the extracellular side; it reads MRWAAATLRG…VPPHETFGFK (103 aa). A glycan (N-linked (GlcNAc...) asparagine) is linked at Asn27. Residues 30-93 form the Sushi domain; that stretch reads GTCAKLRLPP…WSSGSPVCKL (64 aa). Disulfide bonds link Cys32-Cys75 and Cys61-Cys91. Residues 104 to 124 form a helical membrane-spanning segment; the sequence is VAVIASIVSCAIILLMSMAFL. At 125–255 the chain is on the cytoplasmic side; it reads TCCLLKCVKK…PQQPAAYALG (131 aa). Positions 173-255 are disordered; sequence SGPSQAHDNH…PQQPAAYALG (83 aa). The segment covering 179–191 has biased composition (basic and acidic residues); sequence HDNHSFTTDHGES.

In terms of tissue distribution, highly expressed in estrogen receptor-positive breast tumors.

It localises to the cell membrane. Its function is as follows. May play a role in breast tumorigenesis by promoting estrogen-dependent cell proliferation, cell-cell interactions and migration. This is Sushi domain-containing protein 3 (SUSD3) from Homo sapiens (Human).